Reading from the N-terminus, the 63-residue chain is Overexpressed in colon carcinoma 1 protein homolog (63 aa).

A compositionally biased stretch (low complexity) spans 1 to 12; the sequence is MGCGNSTAASAG. Residues 1–40 are disordered; it reads MGCGNSTAASAGAGQGPAGAAKDVTEESITEDDKRRNYGG.

It belongs to the OCC1 family.

This chain is Overexpressed in colon carcinoma 1 protein homolog, found in Bos taurus (Bovine).